The following is a 183-amino-acid chain: Ras-related protein Rap-2a (183 aa).

10 to 17 (GSGGVGKS) contacts GTP. The short motif at 32–40 (YDPTIEDFY) is the Effector region element. Thr-35 carries (Microbial infection) O-linked (Glc) threonine; by C.difficile toxin TcdA, and by P.sordellii toxin TcsL glycosylation. Residues 57 to 61 (DTAGT) and 116 to 119 (NKVD) each bind GTP. S-palmitoyl cysteine attachment occurs at residues Cys-176 and Cys-177. Residue Cys-180 is modified to Cysteine methyl ester. The S-farnesyl cysteine moiety is linked to residue Cys-180. A propeptide spans 181-183 (NIQ) (removed in mature form).

It belongs to the small GTPase superfamily. Ras family. As to quaternary structure, interacts (GTP-bound form) with RUNDC3A. Interacts with RGS14; the interaction is GTP-dependent. Interacts with PLCE1. Interacts with ARHGAP29, SGSM1, SGSM2 and SGSM3. Interacts (GTP-bound form preferentially) with TNIK (via the CNH domain); the interaction is direct and recruits RAP2A to the E3 ubiquitin ligase NEDD4. Interacts with MINK1. Interacts (GTP-bound form preferentially) with MAP4K4. Interacts with cytoskeletal actin. Post-translationally, ubiquitinated; undergoes 'Lys-63' monoubiquitination and diubiquitination by NEDD4. Multiple lysine residues are probably modified. Ubiquitination requires TNIK, prevents interaction with effectors and inactivates RAP2A. Ubiquitination by the ECS(RAB40B) complex leads to RAP2A localization to lamellipodia plasma membrane, activation, and regulation of sorting at early endosomes for recycling to the lamellipodia plasma membrane. Palmitoylated. Palmitoylation is required for association with recycling endosome membranes and activation of TNIK. In terms of processing, (Microbial infection) Glucosylated at Thr-35 by C.difficile toxin TcdA in the colonic epithelium, and by P.sordellii toxin TcsL in the vascular endothelium.

The protein localises to the midbody. It localises to the cell projection. It is found in the lamellipodium membrane. The protein resides in the golgi apparatus. Its subcellular location is the recycling endosome membrane. The protein localises to the lysosome. The catalysed reaction is GTP + H2O = GDP + phosphate + H(+). Its activity is regulated as follows. Activated by the guanine nucleotide-exchange factors RAPGEF3 and RAPGEF4 in a cAMP-dependent manner. Nucleotide exchange is also specifically stimulated by RAPGEF5, RASGEF1A and RASGEF1B. Its function is as follows. Small GTP-binding protein which cycles between a GDP-bound inactive and a GTP-bound active form. In its active form interacts with and regulates several effectors including MAP4K4, MINK1 and TNIK. Part of a signaling complex composed of NEDD4, RAP2A and TNIK which regulates neuronal dendrite extension and arborization during development. More generally, it is part of several signaling cascades and regulates cytoskeletal rearrangements, cell migration, cell adhesion and cell spreading. In Homo sapiens (Human), this protein is Ras-related protein Rap-2a.